The chain runs to 623 residues: Putative ABC transporter ATP-binding protein MG014 homolog (623 aa).

Residues 16-325 (LILAPLFTFA…YIVLGLILTS (310 aa)) form the ABC transmembrane type-1 domain. Helical transmembrane passes span 27–47 (IIID…VFSI), 86–106 (VILL…CASI), 157–177 (FLRL…FAIA), 180–200 (SDMS…IGIL), 266–286 (NIPF…LLVF), and 307–327 (IFAF…TSLT). The region spanning 365–611 (LEFKNVAFGL…CDIYVKMKQA (247 aa)) is the ABC transporter domain. Residue 400–407 (GPTGSGKS) participates in ATP binding.

Belongs to the ABC transporter superfamily.

It localises to the cell membrane. This chain is Putative ABC transporter ATP-binding protein MG014 homolog, found in Mycoplasma pneumoniae (strain ATCC 29342 / M129 / Subtype 1) (Mycoplasmoides pneumoniae).